Consider the following 37-residue polypeptide: Non-specific lipid-transfer protein P4 (37 aa).

It belongs to the plant LTP family.

The protein resides in the secreted. Its function is as follows. Plant non-specific lipid-transfer proteins transfer phospholipids as well as galactolipids across membranes. May play a role in wax or cutin deposition in the cell walls of expanding epidermal cells and certain secretory tissues. This chain is Non-specific lipid-transfer protein P4, found in Vitis sp. (Grape).